A 505-amino-acid chain; its full sequence is Xylose import ATP-binding protein XylG (505 aa).

ABC transporter domains are found at residues leucine 6–glutamate 243 and valine 262–lysine 505. Glycine 38–serine 45 contacts ATP.

The protein belongs to the ABC transporter superfamily. Xylose importer (TC 3.A.1.2.4) family. In terms of assembly, the complex is composed of two ATP-binding proteins (XylG), two transmembrane proteins (XylH) and a solute-binding protein (XylF).

The protein resides in the cell membrane. It catalyses the reaction D-xylose(out) + ATP + H2O = D-xylose(in) + ADP + phosphate + H(+). Functionally, part of the ABC transporter complex XylFGH involved in xylose import. Responsible for energy coupling to the transport system. This Thermoanaerobacter pseudethanolicus (strain ATCC 33223 / 39E) (Clostridium thermohydrosulfuricum) protein is Xylose import ATP-binding protein XylG.